Here is a 356-residue protein sequence, read N- to C-terminus: Icosanoyl-CoA 5-desaturase (356 aa).

A helical membrane pass occupies residues 5-25; the sequence is LYFPISISLSLSLEAMASFIA. The tract at residues 38–58 is disordered; that stretch reads LDPKIPTKPEPKTETPKPKDD. A compositionally biased stretch (basic and acidic residues) spans 42–58; sequence IPTKPEPKTETPKPKDD. Transmembrane regions (helical) follow at residues 88 to 108 and 111 to 131; these read NAVT…YFSW and FWIS…TLCF. The Histidine box-1 signature appears at 132-137; sequence HRCLTH. The Histidine box-2 signature appears at 169–173; it reads HRYHH. A helical transmembrane segment spans residues 236–256; the sequence is ALIALLYYVGGFPYIVWGMGF. The Histidine box-3 signature appears at 302-306; the sequence is HNNHH.

It belongs to the fatty acid desaturase type 1 family. Fe(2+) serves as cofactor.

It localises to the membrane. It catalyses the reaction eicosanoyl-CoA + 2 Fe(II)-[cytochrome b5] + O2 + 2 H(+) = (5Z)-eicosenoyl-CoA + 2 Fe(III)-[cytochrome b5] + 2 H2O. It functions in the pathway lipid metabolism; monounsaturated fatty acid biosynthesis. Its function is as follows. Desaturase involved in the biosynthesis of (5Z)-icos-5-enoate, an unusual monounsaturated fatty acid that makes up to 60% of the total fatty acids in Limnanthes sp. seed oil. Only acts on saturated fatty acids. The sequence is that of Icosanoyl-CoA 5-desaturase from Limnanthes douglasii (Douglas' meadowfoam).